Reading from the N-terminus, the 468-residue chain is MTKTLPKDFIFGGATAAYQAEGATHTDGKGPVAWDKYLEDNYWYTAEPASDFYNRYPVDLKLSEEFGVNGIRISIAWSRIFPTGKGEVNPKGVEYYHNLFAECHKRHVEPFVTLHHFDTPEALHSNGDFLNRENIEHFVNYAELCFKEFSEVNYWTTFNEIGPIGDGQYLVGKFPPGIQYDLAKVFQSHHNMMVSHARAVKLFKDSGYSGEIGVVHALPTKYPFDANNPDDVRAAELEDIIHNKFILDATYLGKYSDKTMEGVNHILEVNGGELDLREEDFAALDAAKDLNDFLGINYYMSDWMQAFDGETEIIHNGKGEKGSSKYQIKGVGRRKAPVDVPKTDWDWIIFPQGLYDQIMRVKADYPNYKKIYITENGLGYKDEFVDNTVYDDGRIDYVKKHLEVISDAISDGANVKGYFMWSLMDVFSWSNGYEKRYGLFYVDFETQERYPKKSAYWYKKVAETQVIE.

Residues Gln-19, His-116, Asn-159, Glu-160, and Asn-297 each contribute to the D-galactose 6-phosphate site. Residue Glu-160 is the Proton donor of the active site. The active-site Nucleophile is the Glu-375. The D-galactose 6-phosphate site is built by Ser-428, Trp-429, Lys-435, and Tyr-437.

Belongs to the glycosyl hydrolase 1 family.

It carries out the reaction a 6-phospho-beta-D-galactoside + H2O = D-galactose 6-phosphate + an alcohol. Its pathway is carbohydrate metabolism; lactose degradation; D-galactose 6-phosphate and beta-D-glucose from lactose 6-phosphate: step 1/1. This chain is 6-phospho-beta-galactosidase, found in Streptococcus pyogenes serotype M12 (strain MGAS2096).